The primary structure comprises 452 residues: Cell division protein FtsZ (452 aa).

GTP contacts are provided by residues 24-28 (GAGSN), 111-113 (GTG), E142, R146, and D190.

This sequence belongs to the FtsZ family. As to quaternary structure, homodimer. Polymerizes to form a dynamic ring structure in a strictly GTP-dependent manner. Interacts directly with several other division proteins.

The protein resides in the cytoplasm. In terms of biological role, essential cell division protein that forms a contractile ring structure (Z ring) at the future cell division site. The regulation of the ring assembly controls the timing and the location of cell division. One of the functions of the FtsZ ring is to recruit other cell division proteins to the septum to produce a new cell wall between the dividing cells. Binds GTP and shows GTPase activity. In Rickettsia felis (strain ATCC VR-1525 / URRWXCal2) (Rickettsia azadi), this protein is Cell division protein FtsZ.